We begin with the raw amino-acid sequence, 106 residues long: Large ribosomal subunit protein uL24 (106 aa).

This sequence belongs to the universal ribosomal protein uL24 family. As to quaternary structure, part of the 50S ribosomal subunit.

Functionally, one of two assembly initiator proteins, it binds directly to the 5'-end of the 23S rRNA, where it nucleates assembly of the 50S subunit. Its function is as follows. One of the proteins that surrounds the polypeptide exit tunnel on the outside of the subunit. This chain is Large ribosomal subunit protein uL24, found in Rhodospirillum rubrum (strain ATCC 11170 / ATH 1.1.1 / DSM 467 / LMG 4362 / NCIMB 8255 / S1).